Here is an 826-residue protein sequence, read N- to C-terminus: Ribonucleoside-diphosphate reductase large subunit (826 aa).

Substrate-binding positions include Thr171, 186–187 (SC), Gly217, 387–391 (NLCAE), and 594–598 (PTSGC). Cys187 and Cys403 are joined by a disulfide. Asn387 acts as the Proton acceptor in catalysis. Residue Cys389 is the Cysteine radical intermediate of the active site. Glu391 functions as the Proton acceptor in the catalytic mechanism. Positions 747–769 (SVPREEQNERSPAEQMPPRPMEP) are disordered. Over residues 749–758 (PREEQNERSP) the composition is skewed to basic and acidic residues.

The protein belongs to the ribonucleoside diphosphate reductase large chain family. As to quaternary structure, heterotetramer composed of a homodimer of the large subunit (R1) and a homodimer of the small subunit (R2). Larger multisubunit protein complex are also active, composed of (R1)n(R2)n.

It carries out the reaction a 2'-deoxyribonucleoside 5'-diphosphate + [thioredoxin]-disulfide + H2O = a ribonucleoside 5'-diphosphate + [thioredoxin]-dithiol. Functionally, ribonucleoside-diphosphate reductase holoenzyme provides the precursors necessary for viral DNA synthesis. Allows virus growth in non-dividing cells, as well as reactivation from latency in infected hosts. Catalyzes the biosynthesis of deoxyribonucleotides from the corresponding ribonucleotides. The sequence is that of Ribonucleoside-diphosphate reductase large subunit from Homo sapiens (Human).